The following is a 59-amino-acid chain: Large ribosomal subunit protein bL32 (59 aa).

Positions 1–21 (MAVPKKKSSKSKGRSRAAHHA) are disordered.

The protein belongs to the bacterial ribosomal protein bL32 family.

This is Large ribosomal subunit protein bL32 from Magnetococcus marinus (strain ATCC BAA-1437 / JCM 17883 / MC-1).